The following is a 180-amino-acid chain: Adenine phosphoribosyltransferase (180 aa).

The residue at position 2 (S2) is an N-acetylserine. Phosphoserine is present on residues S4, S15, and S30. Y60 carries the phosphotyrosine modification. S66 is modified (phosphoserine). K114 bears the N6-acetyllysine mark. Residue T135 is modified to Phosphothreonine.

The protein belongs to the purine/pyrimidine phosphoribosyltransferase family. Homodimer.

Its subcellular location is the cytoplasm. The catalysed reaction is AMP + diphosphate = 5-phospho-alpha-D-ribose 1-diphosphate + adenine. It participates in purine metabolism; AMP biosynthesis via salvage pathway; AMP from adenine: step 1/1. Catalyzes a salvage reaction resulting in the formation of AMP, that is energically less costly than de novo synthesis. The sequence is that of Adenine phosphoribosyltransferase from Mus pahari (Gairdner's shrew-mouse).